A 501-amino-acid polypeptide reads, in one-letter code: E3 ubiquitin-protein ligase TRIM35 (501 aa).

M1 carries the post-translational modification N-acetylmethionine. Phosphoserine is present on S8. The RING-type zinc finger occupies 21-61 (CAVCYDPFRDAVTLRCGHNFCRRCVSGCWEVQTTPSCPVCK). The segment at 96–137 (RSPRPCRAHRAPLTLFCLEDKELLCCACQADARHQEHRVQPI) adopts a B box-type zinc-finger fold. 4 residues coordinate Zn(2+): C101, H104, C123, and H129. Positions 200-252 (VEEQATLDAMKEESRKKHLQAEEKMKQLAEQTEALAREIERLQMEMKEDDMTF) form a coiled coil. Residues 284–495 (LESLQYRVWK…LRICHLRVSI (212 aa)) form the B30.2/SPRY domain.

It belongs to the TRIM/RBCC family. In terms of assembly, interacts with PKM isoform M2, but not isoform M1; this interaction may compete with that between PKM and FGFR1, and hence reduces FGFR1-dependent tyrosine phosphorylation of PKM. Interacts with IRF7; this interaction promotes IRF7 proteasomal degradation. Interacts with TRAF3; this interaction promotes TRAF3 activation. As to expression, widely expressed. Highly expressed in brain, heart, kidney, spleen, skeletal muscle, lung and thymus. Lower expression found in stomach, large intestine and bone marrow.

The protein localises to the cytoplasm. The protein resides in the nucleus. It carries out the reaction S-ubiquitinyl-[E2 ubiquitin-conjugating enzyme]-L-cysteine + [acceptor protein]-L-lysine = [E2 ubiquitin-conjugating enzyme]-L-cysteine + N(6)-ubiquitinyl-[acceptor protein]-L-lysine.. It functions in the pathway protein modification; protein ubiquitination. In terms of biological role, E3 ubiquitin-protein ligase that participates in multiple biological processes including cell death, glucose metabolism, and in particular, the innate immune response. Mediates 'Lys-63'-linked polyubiquitination of TRAF3 thereby promoting type I interferon production via RIG-I signaling pathway. Can also catalyze 'Lys-48'-linked polyubiquitination and proteasomal degradation of viral proteins such as influenza virus PB2. Acts as a negative feedback regulator of TLR7- and TLR9-triggered signaling. Mechanistically, promotes the 'Lys-48'-linked ubiquitination of IRF7 and induces its degradation via a proteasome-dependent pathway. Reduces FGFR1-dependent tyrosine phosphorylation of PKM, inhibiting PKM-dependent lactate production, glucose metabolism, and cell growth. This Mus musculus (Mouse) protein is E3 ubiquitin-protein ligase TRIM35 (Trim35).